A 592-amino-acid chain; its full sequence is MSNTGSARTEEFTKGTGYEATKPNNDTDDDAKQNYPSKEPHMKLGDYTEETSFVDDSIFKREELTPDRNSPANDVEKMEVPKPTPQWMKLKDEGKLGKHRKNRLRRPGRFPVRQESTIDIPGLTVSKRTENDSNNASYGIREKLIIILVGIPATGKSYIGSKLSRYYNWLKYNCRFFSVGDKRREEGASTYSMSADFFDIKNEETFKFRENVALETLEDLLHWMIHENGVIGILDATNSTHERRKHLYDRISKEADIGIMFLESLCTDDILFEENIKLKIKGPDYEGYDTESALKDLRERVDLYKKYYEPLDERDEQLPFLQYVKVINVGIKVVTHNIEGFLAGQAVYFMLNLNIQKRQIWLTRPGESLDTVAGRIGGDASLTPIGKQYAQDLANFMDRQRVLWQLRYTNDLASTNKRFSLSEASSFNVWSSVRKRAIETIEFFNPDSYNVKKIRLLNDLNLGSREGLTLREFSEKYPDEFDVIKRKDYAYRFSGQGGESYLDVIHRLQPLIVEIERSSGNILVVSHRIVSNILMTYFLNYHPEDIIDVGLPLHTLFCIESDRYGTTCMAYRYDAANRQFIKDPMFDLRKRT.

The disordered stretch occupies residues 1–80 (MSNTGSARTE…PANDVEKMEV (80 aa)). Over residues 57-66 (SIFKREELTP) the composition is skewed to basic and acidic residues. Residue 150–157 (GIPATGKS) participates in ATP binding. Residues Asp235 and Cys266 contribute to the active site. Residue Arg300 participates in beta-D-fructose 6-phosphate binding. His527 (proton donor) is an active-site residue.

The protein localises to the cytoplasm. It localises to the nucleus. The enzyme catalyses beta-D-fructose 6-phosphate + ATP = beta-D-fructose 2,6-bisphosphate + ADP + H(+). In terms of biological role, synthesis of fructose 2,6-bisphosphate. The polypeptide is Probable 6-phosphofructo-2-kinase C222.13c (Schizosaccharomyces pombe (strain 972 / ATCC 24843) (Fission yeast)).